The primary structure comprises 407 residues: Methylthioribose-1-phosphate isomerase (407 aa).

The active-site Proton donor is Asp275.

It belongs to the eIF-2B alpha/beta/delta subunits family. MtnA subfamily.

Its subcellular location is the cytoplasm. The protein localises to the nucleus. It catalyses the reaction 5-(methylsulfanyl)-alpha-D-ribose 1-phosphate = 5-(methylsulfanyl)-D-ribulose 1-phosphate. It functions in the pathway amino-acid biosynthesis; L-methionine biosynthesis via salvage pathway; L-methionine from S-methyl-5-thio-alpha-D-ribose 1-phosphate: step 1/6. Functionally, catalyzes the interconversion of methylthioribose-1-phosphate (MTR-1-P) into methylthioribulose-1-phosphate (MTRu-1-P). The sequence is that of Methylthioribose-1-phosphate isomerase from Kluyveromyces lactis (strain ATCC 8585 / CBS 2359 / DSM 70799 / NBRC 1267 / NRRL Y-1140 / WM37) (Yeast).